The chain runs to 398 residues: Cyclic GMP-AMP synthase-like receptor (398 aa).

ATP is bound by residues Ser-57 and 69-71 (EFD). Glu-69, Asp-71, and Asp-192 together coordinate Mg(2+). GTP-binding positions include Asp-192 and 240–247 (SLSFQEQE). ATP contacts are provided by residues 244-247 (QEQE), Lys-265, and 277-281 (SYYIK). Positions 288, 289, and 292 each coordinate Mn(2+).

This sequence belongs to the mab-21 family. Requires Mg(2+) as cofactor. Mn(2+) serves as cofactor.

The catalysed reaction is GTP + ATP = 2',3'-cGAMP + 2 diphosphate. The enzyme catalyses GTP + ATP = pppGp(2'-5')A + diphosphate. It carries out the reaction pppGp(2'-5')A = 2',3'-cGAMP + diphosphate. The enzyme activity is specifically activated by double-stranded RNA (dsRNA). In terms of biological role, nucleotidyltransferase that catalyzes the formation of cyclic GMP-AMP (2',3'-cGAMP) from ATP and GTP and plays a key role in innate immunity. Acts as a key sensor of double-stranded RNA (dsRNA), the presence of dsRNA in the cytoplasm being a danger signal that triggers the immune responses. Directly binds dsRNA, activating the nucleotidyltransferase activity, leading to synthesis of 2',3'-cGAMP, a second messenger that binds to and activates Sting, thereby triggering the antiviral immune response via activation of the NF-kappa-B transcription factor Rel (Relish). The polypeptide is Cyclic GMP-AMP synthase-like receptor (Tribolium castaneum (Red flour beetle)).